Reading from the N-terminus, the 214-residue chain is ATP phosphoribosyltransferase (214 aa).

Belongs to the ATP phosphoribosyltransferase family. Short subfamily. As to quaternary structure, heteromultimer composed of HisG and HisZ subunits.

It localises to the cytoplasm. It carries out the reaction 1-(5-phospho-beta-D-ribosyl)-ATP + diphosphate = 5-phospho-alpha-D-ribose 1-diphosphate + ATP. It participates in amino-acid biosynthesis; L-histidine biosynthesis; L-histidine from 5-phospho-alpha-D-ribose 1-diphosphate: step 1/9. Functionally, catalyzes the condensation of ATP and 5-phosphoribose 1-diphosphate to form N'-(5'-phosphoribosyl)-ATP (PR-ATP). Has a crucial role in the pathway because the rate of histidine biosynthesis seems to be controlled primarily by regulation of HisG enzymatic activity. The polypeptide is ATP phosphoribosyltransferase (Deinococcus deserti (strain DSM 17065 / CIP 109153 / LMG 22923 / VCD115)).